The sequence spans 248 residues: 3-deoxy-manno-octulosonate cytidylyltransferase (248 aa).

Belongs to the KdsB family.

It localises to the cytoplasm. The enzyme catalyses 3-deoxy-alpha-D-manno-oct-2-ulosonate + CTP = CMP-3-deoxy-beta-D-manno-octulosonate + diphosphate. Its pathway is nucleotide-sugar biosynthesis; CMP-3-deoxy-D-manno-octulosonate biosynthesis; CMP-3-deoxy-D-manno-octulosonate from 3-deoxy-D-manno-octulosonate and CTP: step 1/1. It functions in the pathway bacterial outer membrane biogenesis; lipopolysaccharide biosynthesis. Activates KDO (a required 8-carbon sugar) for incorporation into bacterial lipopolysaccharide in Gram-negative bacteria. The chain is 3-deoxy-manno-octulosonate cytidylyltransferase from Escherichia coli (strain K12 / MC4100 / BW2952).